A 79-amino-acid polypeptide reads, in one-letter code: Small ribosomal subunit protein eS17 (79 aa).

It belongs to the eukaryotic ribosomal protein eS17 family.

The sequence is that of Small ribosomal subunit protein eS17 from Saccharolobus solfataricus (strain ATCC 35092 / DSM 1617 / JCM 11322 / P2) (Sulfolobus solfataricus).